The sequence spans 600 residues: Adenine deaminase 4 (600 aa).

This sequence belongs to the metallo-dependent hydrolases superfamily. Adenine deaminase family. It depends on Mn(2+) as a cofactor.

The enzyme catalyses adenine + H2O + H(+) = hypoxanthine + NH4(+). The sequence is that of Adenine deaminase 4 from Rhizobium meliloti (strain 1021) (Ensifer meliloti).